We begin with the raw amino-acid sequence, 300 residues long: Acetylglutamate kinase (300 aa).

Residues 67-68, arginine 89, and asparagine 194 each bind substrate; that span reads GG.

The protein belongs to the acetylglutamate kinase family. ArgB subfamily.

The protein localises to the cytoplasm. It carries out the reaction N-acetyl-L-glutamate + ATP = N-acetyl-L-glutamyl 5-phosphate + ADP. It participates in amino-acid biosynthesis; L-arginine biosynthesis; N(2)-acetyl-L-ornithine from L-glutamate: step 2/4. Catalyzes the ATP-dependent phosphorylation of N-acetyl-L-glutamate. The polypeptide is Acetylglutamate kinase (Saccharophagus degradans (strain 2-40 / ATCC 43961 / DSM 17024)).